The following is a 228-amino-acid chain: 2-phospho-L-lactate guanylyltransferase (228 aa).

The protein belongs to the CofC family. Homodimer.

The enzyme catalyses (2S)-2-phospholactate + GTP + H(+) = (2S)-lactyl-2-diphospho-5'-guanosine + diphosphate. The protein operates within cofactor biosynthesis; coenzyme F420 biosynthesis. Functionally, guanylyltransferase that catalyzes the activation of (2S)-2-phospholactate (2-PL) as (2S)-lactyl-2-diphospho-5'-guanosine, via the condensation of 2-PL with GTP. It is involved in the biosynthesis of coenzyme F420, a hydride carrier cofactor. The polypeptide is 2-phospho-L-lactate guanylyltransferase (Methanosphaera stadtmanae (strain ATCC 43021 / DSM 3091 / JCM 11832 / MCB-3)).